The sequence spans 190 residues: Potassium-transporting ATPase KdpC subunit (190 aa).

A helical transmembrane segment spans residues 11 to 31 (LIVLMSLITGVAYPLVVTGVA).

This sequence belongs to the KdpC family. As to quaternary structure, the system is composed of three essential subunits: KdpA, KdpB and KdpC.

The protein resides in the cell inner membrane. Functionally, part of the high-affinity ATP-driven potassium transport (or Kdp) system, which catalyzes the hydrolysis of ATP coupled with the electrogenic transport of potassium into the cytoplasm. This subunit acts as a catalytic chaperone that increases the ATP-binding affinity of the ATP-hydrolyzing subunit KdpB by the formation of a transient KdpB/KdpC/ATP ternary complex. In Pseudomonas syringae pv. tomato (strain ATCC BAA-871 / DC3000), this protein is Potassium-transporting ATPase KdpC subunit.